Here is a 131-residue protein sequence, read N- to C-terminus: Hydrophilin PGA14 (131 aa).

Residues 1 to 18 (MKFTTVATVFAISSLAAA) form the signal peptide. 2 stretches are compositionally biased toward basic and acidic residues: residues 42–59 (YGRF…ETGT) and 79–96 (KESD…RDSK). The interval 42 to 110 (YGRFDKTSRS…NSTTSSGNNG (69 aa)) is disordered. N-linked (GlcNAc...) asparagine glycosylation is found at Asn-97 and Asn-101. A compositionally biased stretch (low complexity) spans 97 to 110 (NASSNSTTSSGNNG). Ser-105 is lipidated: GPI-anchor amidated serine. Positions 106 to 131 (SGNNGVATGVSLGLAGVLAVGAALVI) are cleaved as a propeptide — removed in mature form.

The protein belongs to the PGA14 family. Post-translationally, the GPI-anchor is attached to the protein in the endoplasmic reticulum and serves to target the protein to the cell surface. There, the glucosamine-inositol phospholipid moiety is cleaved off and the GPI-modified mannoprotein is covalently attached via its lipidless GPI glycan remnant to the 1,6-beta-glucan of the outer cell wall layer.

The protein resides in the secreted. Its subcellular location is the cell wall. It is found in the membrane. Hydrophilin which is essential to overcome the simple stress of the desiccation-rehydration process. The polypeptide is Hydrophilin PGA14 (PGA14) (Candida albicans (strain SC5314 / ATCC MYA-2876) (Yeast)).